We begin with the raw amino-acid sequence, 795 residues long: Histone acetyltransferase KAT2A (795 aa).

The span at 1–18 (MADPAAQSSAQPRLQQAQ) shows a compositional bias: polar residues. The interval 1–55 (MADPAAQSSAQPRLQQAQSSGPTGSNSNPGAGSSDPARPGLSQQQWSSQKKAQVR) is disordered. The span at 19-34 (SSGPTGSNSNPGAGSS) shows a compositional bias: low complexity. In terms of domain architecture, N-acetyltransferase spans 461–614 (VIGNSLSQKS…GATLMECELN (154 aa)). Residue E533 is the Proton donor/acceptor of the active site. Acetyl-CoA contacts are provided by residues 537–539 (CAV), 544–550 (QVKGYGT), and Y575. Succinyl-CoA-binding positions include 537–539 (CAV), 544–550 (QVKGYGT), and Y575. A loop 3 region spans residues 597–606 (LGYIKDYEGA). The Bromo domain maps to 686–790 (KDPDLLYNML…KFFYFKLKEA (105 aa)).

The protein belongs to the acetyltransferase family. GCN5 subfamily.

It is found in the nucleus. The protein localises to the chromosome. Its subcellular location is the cytoplasm. It localises to the cytoskeleton. The protein resides in the microtubule organizing center. It is found in the centrosome. The enzyme catalyses L-lysyl-[histone] + acetyl-CoA = N(6)-acetyl-L-lysyl-[histone] + CoA + H(+). The catalysed reaction is L-lysyl-[protein] + acetyl-CoA = N(6)-acetyl-L-lysyl-[protein] + CoA + H(+). It catalyses the reaction succinyl-CoA + L-lysyl-[protein] = N(6)-succinyl-L-lysyl-[protein] + CoA + H(+). It carries out the reaction glutaryl-CoA + L-lysyl-[protein] = N(6)-glutaryl-L-lysyl-[protein] + CoA + H(+). Its function is as follows. Protein lysine acyltransferase that can act as a acetyltransferase, glutaryltransferasesucc, succinyltransferase or malonyltransferase, depending on the context. Acts as a histone lysine succinyltransferase: catalyzes succinylation of histone H3 on 'Lys-79' (H3K79succ), with a maximum frequency around the transcription start sites of genes. Succinylation of histones gives a specific tag for epigenetic transcription activation. Association with the 2-oxoglutarate dehydrogenase complex, which provides succinyl-CoA, is required for histone succinylation. In different complexes, functions either as an acetyltransferase (HAT) or as a succinyltransferase: in the SAGA and ATAC complexes, acts as a histone acetyltransferase. Has significant histone acetyltransferase activity with core histones, but not with nucleosome core particles. Has a a strong preference for acetylation of H3 at 'Lys-9' (H3K9ac). Acetylation of histones gives a specific tag for epigenetic transcription activation. Also acetylates non-histone proteins, such as tbx5. Involved in heart and limb development by mediating acetylation of tbx5. Together with kat2b, required for growth and differentiation of craniofacial cartilage and bone by regulating acetylation of histone H3 at 'Lys-9' (H3K9ac). Also acts as a histone glutaryltransferase: catalyzes glutarylation of histone H4 on 'Lys-91' (H4K91glu), a mark that destabilizes nucleosomes by promoting dissociation of the H2A-H2B dimers from nucleosomes. The chain is Histone acetyltransferase KAT2A from Danio rerio (Zebrafish).